A 285-amino-acid chain; its full sequence is MLYLTKIRNAESEFTGNEQKIADFLRANVSELKSVSSRKMAKLLGISQSSIVKFAQKLGAQGFTELRMALIGEYSASREKTNATALHLHSSITSDDSLEVIARKLNREKELALEQTCALFDYARLQKIIEAISKAPFIQITGLGGSALVGRDLSFKLMKIGYRVACEADTHVQATVSQALKKGDVQIAISYSGSKKEIVLCAEAARKQGATVIAITSLTDSPLRRLAHFTLDTVSGETEWRSSSMSTRTAQNSVTDLLFVGLVQLNDVESLKMIERSSELTQRLK.

The HTH rpiR-type domain maps to 1-77 (MLYLTKIRNA…MALIGEYSAS (77 aa)). Positions 37-56 (SRKMAKLLGISQSSIVKFAQ) form a DNA-binding region, H-T-H motif. The region spanning 128-268 (IIEAISKAPF…FVGLVQLNDV (141 aa)) is the SIS domain.

As to quaternary structure, homotetramer.

Its pathway is amino-sugar metabolism; N-acetylmuramate degradation [regulation]. Functionally, represses the expression of the murPQ operon involved in the uptake and degradation of N-acetylmuramic acid (MurNAc). Binds to two adjacent inverted repeats within the operator region. MurNAc 6-phosphate, the substrate of MurQ, is the specific inducer that weakens binding of MurR to the operator. The protein is HTH-type transcriptional regulator MurR of Escherichia coli O17:K52:H18 (strain UMN026 / ExPEC).